The primary structure comprises 817 residues: Dolichyl-phosphate-mannose--protein mannosyltransferase 1 (817 aa).

Ser-2 is subject to N-acetylserine. Over 2–50 (SEEKTYKRVEQDDPVPELDIKQGPVRPFIVTDPSAELASLRTMVTLKEK) the chain is Cytoplasmic. A helical membrane pass occupies residues 51-70 (LLVACLAVFTAVIRLHGLAW). Topologically, residues 71 to 135 (PDSVVFDEVH…DSFPSTTPYV (65 aa)) are lumenal. Residues 136–154 (LMRFFSASLGALTVILMYM) form a helical membrane-spanning segment. Residues 155 to 179 (TLRYSGVRMWVALMSAICFAVENSY) lie on the Cytoplasmic side of the membrane. Residues 180-200 (VTISRYILLDAPLMFFIAAAV) form a helical membrane-spanning segment. The Lumenal segment spans residues 201–234 (YSFKKYEMYPANSLNAYKSLLATGIALGMASSSK). The chain crosses the membrane as a helical span at residues 235-259 (WVGLFTVTWVGLLCIWRLWFMIGDL). The Cytoplasmic segment spans residues 260 to 273 (TKSSKSIFKVAFAK). Residues 274-291 (LAFLLGVPFALYLVFFYI) traverse the membrane as a helical segment. The Lumenal segment spans residues 292–584 (HFQSLTLDGD…GENNRNVYLL (293 aa)). MIR domains follow at residues 324–378 (VADV…LELY), 388–448 (FQNL…VEID), and 459–514 (ERVI…VENN). Asn-390 and Asn-513 each carry an N-linked (GlcNAc...) asparagine glycan. The helical transmembrane segment at 585 to 605 (GNAIVWWAVTAFIGIFGLIVI) threads the bilayer. Residues 606 to 685 (TELFSWQLGK…SYVFRSKRQM (80 aa)) are Cytoplasmic-facing. Residues 686–710 (GYAVVITFLAASVYFFKSFSPIIYG) traverse the membrane as a helical segment. The Lumenal portion of the chain corresponds to 711–817 (TPWTQELCQK…LKVEKRAVLE (107 aa)). N-linked (GlcNAc...) asparagine glycosylation occurs at Asn-743.

Belongs to the glycosyltransferase 39 family. In terms of assembly, PMT1 and PMT2 form a functional heterodimer. The complex interacts with endoplasmic reticulum proteins EMP24, ERV25, ERP1, ERP2, CDC48, HRD1, USA1, YOS9, ERO1, PDI1, UBR1, Cue4, DFM1 and TED1. Forms also a minor complex with PMT3.

The protein resides in the endoplasmic reticulum membrane. The enzyme catalyses a di-trans,poly-cis-dolichyl beta-D-mannosyl phosphate + L-seryl-[protein] = 3-O-(alpha-D-mannosyl)-L-seryl-[protein] + a di-trans,poly-cis-dolichyl phosphate + H(+). It catalyses the reaction a di-trans,poly-cis-dolichyl beta-D-mannosyl phosphate + L-threonyl-[protein] = 3-O-(alpha-D-mannosyl)-L-threonyl-[protein] + a di-trans,poly-cis-dolichyl phosphate + H(+). It participates in protein modification; protein glycosylation. Its function is as follows. Protein O-mannosyltransferase involved in O-glycosylation which is essential for cell wall rigidity. Forms a heterodimeric complex with PMT2 and more rarely with PMT3 to transfer mannose from Dol-P-mannose to Ser or Thr residues on proteins. The PMT1-PMT2 complex participates in oxidative protein folding, ER-associated protein degradation (ERAD), as well as ER export. Required for incorporation of proteins in the cell wall. In Saccharomyces cerevisiae (strain ATCC 204508 / S288c) (Baker's yeast), this protein is Dolichyl-phosphate-mannose--protein mannosyltransferase 1.